The following is a 595-amino-acid chain: MPACCSWNDVLQYETNKVTRIQSTNYGTVKWVLHMIVFSYISFALVSDKLYQRKEPVISSVHTKVKGIAEVTENVTEGGVTKLGHSIFDTADYTFPLQGNSFFVMTNYVKSEGQVQTLCPEYPRRGAQCSSDRRCKKGWMDPQSKGIQTGRCVPYDKTRKTCEVSAWCPTEEEKEAPRPALLRSAENFTVLIKNNIHFPGHNYTTRNILPTMNGSCTFHKTWDPQCSIFRLGDIFQEAGENFTEVAVQGGIMGIEIYWDCNLDSWSHHCRPRYSFRRLDDKNTDESFVPGYNFRYAKYYKENNVEKRTLIKAFGIRFDILVFGTGGKFDIIQLVVYIGSTLSYFGLATVCIDLLINTYSSAFCRSGVYPYCKCCEPCTVNEYYYRKKCESIMEPKPTLKYVSFVDEPHIRMVDQQLLGKSLQVVKGQEVPRPQMDFSDLSRLSLSLHDSPLTPGQSEEIQLLHEEVAPKSGDSPSWCQCGNCLPSRLPEQRRALEELCCRRKPGRCITTSKLFHKLVLSRDTLQLLLLYQDPLLVLGEEATNSRLRHRAYRCYATWRFGSQDMADFAILPSCCRWRIRKEFPKTEGQYSGFKYPY.

The Cytoplasmic segment spans residues 1–22; it reads MPACCSWNDVLQYETNKVTRIQ. A lipid anchor (S-palmitoyl cysteine) is attached at C4. Residues 23–46 traverse the membrane as a helical segment; the sequence is STNYGTVKWVLHMIVFSYISFALV. Residues 47 to 328 lie on the Extracellular side of the membrane; the sequence is SDKLYQRKEP…ILVFGTGGKF (282 aa). N-linked (GlcNAc...) asparagine glycosylation occurs at N74. 3 disulfide bridges follow: C119–C168, C129–C152, and C135–C162. Residues R125 and R133 each carry the ADP-ribosylarginine; by ART2B modification. N187 is a glycosylation site (N-linked (GlcNAc...) asparagine). Position 189 (T189) interacts with ATP. N-linked (GlcNAc...) asparagine glycosylation is found at N202 and N213. Residues C216 and C226 are joined by a disulfide bond. N241 carries N-linked (GlcNAc...) asparagine glycosylation. An intrachain disulfide couples C260 to C269. The ATP site is built by R294 and K311. The chain crosses the membrane as a helical span at residues 329–353; sequence DIIQLVVYIGSTLSYFGLATVCIDL. S342 provides a ligand contact to Na(+). Residues 354–595 are Cytoplasmic-facing; sequence LINTYSSAFC…GQYSGFKYPY (242 aa). Residues 360-377 are C-cys anchor; that stretch reads SAFCRSGVYPYCKCCEPC. Residues C363, C374, and C377 are each lipidated (S-palmitoyl cysteine). A Phosphoserine modification is found at S390. Residues 395–595 are cytoplasmic ballast; that stretch reads KPTLKYVSFV…GQYSGFKYPY (201 aa). Residues C479, C499, and C506 each coordinate Zn(2+). 4 residues coordinate GTP: R546, H547, Y550, and A567. C572 contacts Zn(2+). GTP-binding residues include K583, S589, and G590.

It belongs to the P2X receptor family. Homotrimers. Interacts with LAMA3, ITGB2, ACTB, ACTN4, SVIL, MPP3, HSPA1, HSPCB, HSPA8, PIK230 and PTPRB. Interacts (via C-terminus) with EMP2. Post-translationally, phosphorylation results in its inactivation. ADP-ribosylation at Arg-125 is necessary and sufficient to activate P2RX7 and gate the channel. In terms of processing, palmitoylation of several cysteines in the C-terminal cytoplasmic tail is required for efficient localization to cell surface. Palmitoylation prevents channel desensitization by physically anchoring the palmitoylated groups to the membrane.

Its subcellular location is the cell membrane. It carries out the reaction Ca(2+)(in) = Ca(2+)(out). The enzyme catalyses K(+)(in) = K(+)(out). The catalysed reaction is Na(+)(in) = Na(+)(out). Its activity is regulated as follows. Activated by high extracellular ATP levels (0.1-2.5 mM). The synthetic analog 2'(3')-O-(4-benzoylbenzoyl)ATP (BzATP) acts as a potent agonist. Does not undergo desensitization, instead, undergoes a facilitation process where currents progressively increase with repetitive or prolonged agonist application. Palmitoylation prevents channel desensitization. The permeability of the P2RX7 channel is modulated by the amount of cholesterol in the plasma membrane. In terms of biological role, ATP-gated nonselective transmembrane cation channel. Requires high millimolar-range concentrations of ATP to become activated. ATP binding trigers the rapid opening of the channel and allows Na(+) and Ca(2+) influx and K(+) efflux. Has also the ability to form a large pore in the cell membrane, allowing the passage of large cationic molecules. In microglia, may mediate NADPH transport across the plasma membrane. In immune cells, P2RX7 acts as a molecular sensor in pathological inflammatory states by detecting and responding to high local concentrations of extracellar ATP. In microglial cells, P2RX7 activation leads to the release of pro-inflammatory cytokines, such as IL-1beta and IL-18, through the activation of the NLRP3 inflammasome and caspase-1. Cooperates with KCNK6 to activate NLRP3 inflammasome. Activates death pathways leading to apoptosis and autophagy. Activates death pathways leading to pyroptosis. The sequence is that of P2X purinoceptor 7 (P2rx7) from Mus musculus (Mouse).